The sequence spans 467 residues: Venom prothrombin activator pseutarin-C catalytic subunit (467 aa).

An N-terminal signal peptide occupies residues 1 to 22 (MAPQLLLCLILTFLWSLPEAES). Residues 23–40 (NVFLKSKVANRFLQRTKR) constitute a propeptide that is removed on maturation. Residues 41-86 (ANSLVEEFKSGNIERECIEERCSKEEAREVFEDDEKTETFWNVYVD) form the Gla domain. 10 positions are modified to 4-carboxyglutamate: glutamate 46, glutamate 47, glutamate 54, glutamate 56, glutamate 59, glutamate 60, glutamate 65, glutamate 66, glutamate 69, and glutamate 72. A disulfide bridge links cysteine 57 with cysteine 62. The region spanning 86-122 (DGDQCSSNPCHYRGICKDGIGSYTCTCLSGYEGKNCE) is the EGF-like 1; calcium-binding domain. 11 disulfide bridges follow: cysteine 90–cysteine 101, cysteine 95–cysteine 110, cysteine 112–cysteine 121, cysteine 129–cysteine 140, cysteine 136–cysteine 149, cysteine 151–cysteine 164, cysteine 172–cysteine 329, cysteine 216–cysteine 221, cysteine 236–cysteine 252, cysteine 377–cysteine 391, and cysteine 402–cysteine 430. Serine 92 carries an O-linked (Hex...) serine glycan. Residues 129-164 (CRVDNGNCWHFCKSVQNDIQCSCAEGYLLGEDGHSC) enclose the EGF-like 2 domain. The propeptide at 182–209 (REASLPDFVQSHNATLLKKSDNPSPDIR) is activation peptide. The Peptidase S1 domain occupies 210-454 (IVNGMDCKLG…FIPWIKRIMR (245 aa)). Catalysis depends on histidine 251, which acts as the Charge relay system. N-linked (GlcNAc...) asparagine glycosylation is present at asparagine 254. The Charge relay system role is filled by aspartate 309. Serine 406 serves as the catalytic Charge relay system.

The protein belongs to the peptidase S1 family. Snake venom subfamily. Heterodimer of a light and a heavy chains; disulfide-linked. Is associated with pseutarin-C non-catalytic subunit (AC Q7SZN0) in a non-covalent manner. Gamma-carboxyglutamate residues are formed by vitamin K dependent carboxylation. These residues are essential for the binding of calcium. Expressed by the venom gland.

The protein resides in the secreted. It carries out the reaction Selective cleavage of Arg-|-Thr and then Arg-|-Ile bonds in prothrombin to form thrombin.. Activated by calcium and negatively charged phospholipids. Snake prothrombin activator that attacks the hemostatic system of prey. This non-catalytic subunit is functionally similar to blood coagulation factor V. It serves as a critical cofactor for the prothrombinase activity of the catalytic subunit, which is similar to the blood coagulation factor X. The complex converts prothrombin to thrombin by sequential cleavage at two positions, Arg-320 followed by Arg-271. Cleavage at Arg-320 produces an active intermediate known as meizothrombin. Meizothrombin is the 'second' substrate for prothrombinase, and it docks in an altered manner to present the second cleavage site (271). Cleavage at Arg-271 releases active thrombin from its pro-fragment. This order of events is reversed if the protease component of prothrombinase is used on its own, suggesting that the 271 site is inherently more accessible to proteolysis. The complex converts prothrombin to thrombin in presence but also in the absence of membrane. In Pseudonaja textilis (Eastern brown snake), this protein is Venom prothrombin activator pseutarin-C catalytic subunit.